A 547-amino-acid chain; its full sequence is Chaperonin GroEL (547 aa).

Residues Thr29–Pro32, Lys50, Asp86–Thr90, Gly414, and Asp495 contribute to the ATP site. Residues Pro525–Phe547 are disordered. The segment covering Gly537–Phe547 has biased composition (gly residues).

Belongs to the chaperonin (HSP60) family. Forms a cylinder of 14 subunits composed of two heptameric rings stacked back-to-back. Interacts with the co-chaperonin GroES.

It is found in the cytoplasm. It carries out the reaction ATP + H2O + a folded polypeptide = ADP + phosphate + an unfolded polypeptide.. Functionally, together with its co-chaperonin GroES, plays an essential role in assisting protein folding. The GroEL-GroES system forms a nano-cage that allows encapsulation of the non-native substrate proteins and provides a physical environment optimized to promote and accelerate protein folding. The chain is Chaperonin GroEL from Rickettsia felis (strain ATCC VR-1525 / URRWXCal2) (Rickettsia azadi).